The sequence spans 281 residues: Diaminopimelate epimerase (281 aa).

Residues Asn13 and Asn66 each contribute to the substrate site. The active-site Proton donor is the Cys75. Substrate is bound by residues 76–77 (GN), Asn164, Asn197, and 215–216 (ER). Cys224 functions as the Proton acceptor in the catalytic mechanism. 225 to 226 (GT) is a substrate binding site.

The protein belongs to the diaminopimelate epimerase family. Homodimer.

The protein localises to the cytoplasm. The catalysed reaction is (2S,6S)-2,6-diaminopimelate = meso-2,6-diaminopimelate. Its pathway is amino-acid biosynthesis; L-lysine biosynthesis via DAP pathway; DL-2,6-diaminopimelate from LL-2,6-diaminopimelate: step 1/1. Its function is as follows. Catalyzes the stereoinversion of LL-2,6-diaminopimelate (L,L-DAP) to meso-diaminopimelate (meso-DAP), a precursor of L-lysine and an essential component of the bacterial peptidoglycan. The polypeptide is Diaminopimelate epimerase (Microcystis aeruginosa (strain NIES-843 / IAM M-2473)).